The following is a 219-amino-acid chain: Bacterial microcompartment shell protein EutL (219 aa).

2 BMC circularly permuted domains span residues 1 to 113 (MPAL…GAAF) and 114 to 215 (QWAN…ARNP). Ethanolamine is bound by residues aspartate 45, aspartate 46, glutamate 83, and phenylalanine 113. A part of the acidic patch lining the small pore region spans residues 45-46 (DD). Glutamate 157 is a binding site for Zn(2+). Position 183–185 (183–185 (TNY)) interacts with ethanolamine.

This sequence belongs to the EutL/PduB family. As to quaternary structure, homotrimerizes to form a pseudohexamer. The trimers form a two-dimensional array about 37 Angstroms thick.

The protein localises to the bacterial microcompartment. Its pathway is amine and polyamine degradation; ethanolamine degradation. A component of the bacterial microcompartment (BMC) shell dedicated to ethanolamine degradation. Two crystal forms have been seen; a form with a closed central pore that has 3 very small (1.1-2.2 Angstroms) channels per trimer lined by acidic and aromatic residues. A form with a large central pore (8-12 Angstroms) has also been seen; this is probably a functional pore which allows molecules to enter and exit the BMC in a selective, gated manner. Another group only sees the central pore in the presence of Zn(2+); soaking crystals in ZnCl(2) leads to dramatic conformational changes that open a central pore of about 12 Angstroms. Whether Zn(2+) binding is physiologically relevant is unclear, however it suggests a gating mechanism exists. Ethanolamine-binding by the small channels has been hypothesized to stabilize the EutL central pore in a closed (non-transporting) state. An open pore is thought to be large enough to transport ATP and/or cobalamin. The protein is Bacterial microcompartment shell protein EutL (eutL) of Escherichia coli (strain K12).